The sequence spans 344 residues: 5-formaminoimidazole-4-carboxamide-1-(beta)-D-ribofuranosyl 5'-monophosphate synthetase (344 aa).

H31 and S96 together coordinate 5-amino-1-(5-phospho-beta-D-ribosyl)imidazole-4-carboxamide. One can recognise an ATP-grasp domain in the interval 130–324 (MELLQRAGVP…YFDRPMDMGE (195 aa)). ATP contacts are provided by residues 153–198 (PVIV…VPAY) and E220. Residue N240 coordinates 5-amino-1-(5-phospho-beta-D-ribosyl)imidazole-4-carboxamide. Mg(2+) is bound by residues E279 and E292.

Belongs to the phosphohexose mutase family. Mg(2+) is required as a cofactor. The cofactor is Mn(2+).

It carries out the reaction 5-amino-1-(5-phospho-beta-D-ribosyl)imidazole-4-carboxamide + formate + ATP = 5-formamido-1-(5-phospho-D-ribosyl)imidazole-4-carboxamide + ADP + phosphate. The protein operates within purine metabolism; IMP biosynthesis via de novo pathway; 5-formamido-1-(5-phospho-D-ribosyl)imidazole-4-carboxamide from 5-amino-1-(5-phospho-D-ribosyl)imidazole-4-carboxamide (formate route): step 1/1. Catalyzes the ATP- and formate-dependent formylation of 5-aminoimidazole-4-carboxamide-1-beta-d-ribofuranosyl 5'-monophosphate (AICAR) to 5-formaminoimidazole-4-carboxamide-1-beta-d-ribofuranosyl 5'-monophosphate (FAICAR) in the absence of folates. This chain is 5-formaminoimidazole-4-carboxamide-1-(beta)-D-ribofuranosyl 5'-monophosphate synthetase, found in Pyrobaculum neutrophilum (strain DSM 2338 / JCM 9278 / NBRC 100436 / V24Sta) (Thermoproteus neutrophilus).